The sequence spans 160 residues: Eosinophil cationic protein (160 aa).

The signal sequence occupies residues 1-27 (MVPKLFTSQICLLLLLGLMGVEGSLHA). The interval 28 to 72 (RPPQFTRAQWFAIQHISLNPPRCTIAMRAINNYRWRCKNQNTFLR) is required for nearly all of the bactericidal activity; partially involved in LPS-binding and bacterial membrane depolarization. Residue His42 is the Proton acceptor of the active site. 4 disulfide bridges follow: Cys50–Cys110, Cys64–Cys123, Cys82–Cys138, and Cys89–Cys98. At Tyr60 the chain carries 3'-nitrotyrosine. Substrate is bound at residue 65–69 (KNQNT). 3 N-linked (GlcNAc...) asparagine glycosylation sites follow: Asn84, Asn92, and Asn119. His155 acts as the Proton donor in catalysis.

Belongs to the pancreatic ribonuclease family. As to quaternary structure, interacts with bacterial lipopolysaccharide (LPS) and lipoteichoic acid (LTA). In vitro interacts with and insert into lipid bilayers composed of dioleoyl phosphatidylcholine and dioleoyl phosphatidylglycerol. In vitro, tends to form amyloid-like aggregates at pH 3, but not at pH 5, nor 7.

Its subcellular location is the secreted. Cytotoxin and helminthotoxin with low-efficiency ribonuclease activity. Possesses a wide variety of biological activities. Exhibits antibacterial activity, including cytoplasmic membrane depolarization of preferentially Gram-negative, but also Gram-positive strains. Promotes E.coli outer membrane detachment, alteration of the overall cell shape and partial loss of cell content. This Homo sapiens (Human) protein is Eosinophil cationic protein (RNASE3).